The chain runs to 308 residues: UDP-N-acetylenolpyruvoylglucosamine reductase (308 aa).

The region spanning 22-185 (RVGGPADWLF…TEATFRAEAG (164 aa)) is the FAD-binding PCMH-type domain. Residue arginine 165 is part of the active site. Residues 197-211 (QIARRDSSQPTKERS) show a composition bias toward basic and acidic residues. Residues 197–228 (QIARRDSSQPTKERSAGSTFRNPAGFSSTGRA) form a disordered region. Polar residues predominate over residues 212–226 (AGSTFRNPAGFSSTG). The Proton donor role is filled by serine 214. The active site involves glutamate 296.

It belongs to the MurB family. FAD serves as cofactor.

It localises to the cytoplasm. The catalysed reaction is UDP-N-acetyl-alpha-D-muramate + NADP(+) = UDP-N-acetyl-3-O-(1-carboxyvinyl)-alpha-D-glucosamine + NADPH + H(+). It participates in cell wall biogenesis; peptidoglycan biosynthesis. Cell wall formation. The polypeptide is UDP-N-acetylenolpyruvoylglucosamine reductase (Cereibacter sphaeroides (strain ATCC 17029 / ATH 2.4.9) (Rhodobacter sphaeroides)).